The sequence spans 337 residues: Ribose-phosphate pyrophosphokinase 4 (337 aa).

Ser-2 carries the post-translational modification N-acetylserine. Mg(2+) is bound by residues Asp-158 and His-160. The segment at 241-256 is binding of phosphoribosylpyrophosphate; that stretch reads GCHVVIVDDLVQSGGT.

This sequence belongs to the ribose-phosphate pyrophosphokinase family.

It carries out the reaction D-ribose 5-phosphate + ATP = 5-phospho-alpha-D-ribose 1-diphosphate + AMP + H(+). This Arabidopsis thaliana (Mouse-ear cress) protein is Ribose-phosphate pyrophosphokinase 4 (PRS4).